The sequence spans 527 residues: Glucose transporter 1B/1C/1D/1F/2B (527 aa).

The segment at 1-22 (MTERRDNVSHAPDAIEGPNDGA) is disordered. At 1–43 (MTERRDNVSHAPDAIEGPNDGAHAEDTSPGFFSLENLGVAQVQ) the chain is on the cytoplasmic side. Residues 44-64 (VVGGTLNGYVIGYVAVYLLLY) traverse the membrane as a helical segment. At 65–118 (LTATECKFTTEGACGGRKIYGCKWSGTTCKFENPKCSEGSDPSDSCKNEVAYTS) the chain is on the extracellular side. Residues 119–139 (VYSGIFACAMIVGSMVGSIIA) traverse the membrane as a helical segment. The Cytoplasmic segment spans residues 140–151 (GKCITTFGLKKS). A helical membrane pass occupies residues 152–172 (FIIVSITCTIACVVVQVAIEY). Residues 173–175 (NNY) are Extracellular-facing. A helical membrane pass occupies residues 176 to 196 (YALCTGRVLIGLGVGILCSVF). At 197-213 (PMYVNENAHPKLCKMDG) the chain is on the cytoplasmic side. The helical transmembrane segment at 214 to 234 (VLFQVFTTLGIMLAAMLGLIL) threads the bilayer. The Extracellular portion of the chain corresponds to 235 to 249 (DKTGASKEEANMAGR). A helical transmembrane segment spans residues 250 to 270 (LHVFSAVPLGLSVAMFLVGMF). Over 271–299 (LRESTATFAQDDDGKADGGMDPNEYGWGQ) the chain is Cytoplasmic. Residues 300–320 (MLWPLFMGAVTAGTLQLTGIN) traverse the membrane as a helical segment. Residues 321–338 (AVMNYAPKITENLGMDPS) are Extracellular-facing. A helical transmembrane segment spans residues 339–359 (LGNFLVMAWNFVTSLVAIPLA). Residues 360–372 (SRFTMRQMFITCS) lie on the Cytoplasmic side of the membrane. Residues 373-393 (FVASCMCLFLCGIPVFPGVAG) traverse the membrane as a helical segment. Residues 394 to 403 (KEVKNGVATT) lie on the Extracellular side of the membrane. Residues 404-424 (GIALFIAAFEFGVGSCFFVLA) form a helical membrane-spanning segment. The Cytoplasmic portion of the chain corresponds to 425–436 (QDLFPPSFRPKG). A helical transmembrane segment spans residues 437 to 457 (GSFVVMMQFIFNILINLLYPI). Residues 458–475 (TTEAISGGATGNQDKGQA) are Extracellular-facing. The chain crosses the membrane as a helical span at residues 476–496 (VAFILFGLIGLICSVLQFFYL). The Cytoplasmic portion of the chain corresponds to 497 to 527 (YPYDANQDHENDHGGEPVEQKTYPVEASPRN). Over residues 506–515 (ENDHGGEPVE) the composition is skewed to basic and acidic residues. The segment at 506 to 527 (ENDHGGEPVEQKTYPVEASPRN) is disordered.

This sequence belongs to the major facilitator superfamily. Sugar transporter (TC 2.A.1.1) family.

It is found in the membrane. Functionally, facilitative glucose transporter. The protein is Glucose transporter 1B/1C/1D/1F/2B (THT1B) of Trypanosoma brucei brucei.